Reading from the N-terminus, the 153-residue chain is 6,7-dimethyl-8-ribityllumazine synthase (153 aa).

5-amino-6-(D-ribitylamino)uracil contacts are provided by residues phenylalanine 21, 55-57, and 79-81; these read AFE and TVI. Position 84-85 (84-85) interacts with (2S)-2-hydroxy-3-oxobutyl phosphate; the sequence is AT. Residue histidine 87 is the Proton donor of the active site. Phenylalanine 112 serves as a coordination point for 5-amino-6-(D-ribitylamino)uracil. Arginine 126 is a binding site for (2S)-2-hydroxy-3-oxobutyl phosphate.

This sequence belongs to the DMRL synthase family. Forms an icosahedral capsid composed of 60 subunits, arranged as a dodecamer of pentamers.

The catalysed reaction is (2S)-2-hydroxy-3-oxobutyl phosphate + 5-amino-6-(D-ribitylamino)uracil = 6,7-dimethyl-8-(1-D-ribityl)lumazine + phosphate + 2 H2O + H(+). Its pathway is cofactor biosynthesis; riboflavin biosynthesis; riboflavin from 2-hydroxy-3-oxobutyl phosphate and 5-amino-6-(D-ribitylamino)uracil: step 1/2. Catalyzes the formation of 6,7-dimethyl-8-ribityllumazine by condensation of 5-amino-6-(D-ribitylamino)uracil with 3,4-dihydroxy-2-butanone 4-phosphate. This is the penultimate step in the biosynthesis of riboflavin. The polypeptide is 6,7-dimethyl-8-ribityllumazine synthase (Bacillus anthracis (strain A0248)).